The sequence spans 467 residues: Protein indeterminate-domain 6, chloroplastic (467 aa).

A chloroplast-targeting transit peptide spans 1-20 (MSSSYNTIALSSTPTFLLSS). The disordered stretch occupies residues 38–65 (TMVQQQPTSSVAPPPKKRRNQPGNPNPD). The segment covering 39–48 (MVQQQPTSSV) has biased composition (polar residues). S72 is modified (phosphoserine). C2H2-type zinc fingers lie at residues 82–104 (FLCE…RRGH) and 123–153 (YLCP…YRKH). Residues 158–181 (WKCDKCSKRYAVQSDWKAHSKTCG) form a C2H2-type 2; degenerate zinc finger. Zn(2+) contacts are provided by C160, C163, H176, C180, C187, C189, H202, and C206. The CCHC-type 2; atypical zinc finger occupies 185–208 (YRCDCGTIFSRRDSYITHRAFCDA). An SHR-binding region spans residues 195 to 207 (RRDSYITHRAFCD). The interval 440–467 (NGRGGRSGGPPLDAEMKFSHPNHPYGKA) is disordered.

The protein localises to the plastid. The protein resides in the chloroplast. Functionally, probable transcription factor. This is Protein indeterminate-domain 6, chloroplastic from Arabidopsis thaliana (Mouse-ear cress).